Consider the following 693-residue polypeptide: eEF1A lysine and N-terminal methyltransferase (693 aa).

This sequence belongs to the methyltransferase superfamily.

The catalysed reaction is L-lysyl-[protein] + S-adenosyl-L-methionine = N(6)-methyl-L-lysyl-[protein] + S-adenosyl-L-homocysteine + H(+). It carries out the reaction N(6)-methyl-L-lysyl-[protein] + S-adenosyl-L-methionine = N(6),N(6)-dimethyl-L-lysyl-[protein] + S-adenosyl-L-homocysteine + H(+). The enzyme catalyses N-terminal glycyl-L-lysyl-L-glutamyl-[protein] + 3 S-adenosyl-L-methionine = N-terminal N,N,N-trimethyl-glycyl-L-lysyl-L-glutamyl-[protein] + 3 S-adenosyl-L-homocysteine + 3 H(+). Its function is as follows. Dual methyltransferase that catalyzes methylation of elongation factor 1-alpha (eef1a1 and eef1a2) at two different positions, and is therefore involved in the regulation of mRNA translation. Via its C-terminus, methylates the N-terminus of eef1a1 and eef1a2. Via its N-terminus dimethylates lysine residues of eef1a1 and eef1a2. The polypeptide is eEF1A lysine and N-terminal methyltransferase (mettl13) (Xenopus laevis (African clawed frog)).